The primary structure comprises 2157 residues: Genome polyprotein (2157 aa).

The N-myristoyl glycine; by host moiety is linked to residue glycine 2. The Cytoplasmic segment spans residues 2–1470 (GAQVSRQNVG…DLNIANSIIA (1469 aa)). The tract at residues 567–584 (PIEQNPVENYIDEVLNEV) is amphipathic alpha-helix. Residues histidine 875 and aspartate 892 each act as for protease 2A activity in the active site. Zn(2+)-binding residues include cysteine 909 and cysteine 911. Cysteine 963 serves as the catalytic For protease 2A activity. The Zn(2+) site is built by cysteine 969 and histidine 971. Residues 1095 to 1164 (SDSWLKKFTE…NLRAADSATQ (70 aa)) form a membrane-binding region. Positions 1095–1228 (SDSWLKKFTE…PPGTGKSITT (134 aa)) are oligomerization. Residues 1116-1120 (GNKIS) form an RNA-binding region. Residues 1188–1350 (EAKRIKVLYN…YKDTQGKLDV (163 aa)) enclose the SF3 helicase domain. Zn(2+) is bound by residues cysteine 1357, cysteine 1368, and cysteine 1373. A C4-type; degenerate zinc finger spans residues 1357 to 1373 (CNVNTKIGNAKCCPFVC). Positions 1400–1407 (EDKRRRQV) are RNA-binding. An oligomerization region spans residues 1411 to 1416 (MSAIFQ). The stretch at 1471–1486 (IIANIISIAGIIFVIY) is an intramembrane region. The Cytoplasmic segment spans residues 1487 to 2157 (KLFCSLQGPY…LLKHEWYEKF (671 aa)). Tyrosine 1496 carries the post-translational modification O-(5'-phospho-RNA)-tyrosine. The Peptidase C3 domain maps to 1515 to 1693 (GPEEEFGRSI…FSAMLLRSYF (179 aa)). Catalysis depends on for protease 3C activity residues histidine 1554, glutamate 1585, and cysteine 1661. Positions 1925–2038 (DCIMAFDYTN…SYKYTLDMEA (114 aa)) constitute a RdRp catalytic domain. Mg(2+)-binding residues include aspartate 1931 and aspartate 2024.

Belongs to the picornaviruses polyprotein family. As to quaternary structure, interacts with capsid protein VP1 and capsid protein VP3 to form heterotrimeric protomers. In terms of assembly, interacts with capsid protein VP0, and capsid protein VP3 to form heterotrimeric protomers. Five protomers subsequently associate to form pentamers which serve as building blocks for the capsid. Interacts with capsid protein VP2, capsid protein VP3 and capsid protein VP4 following cleavage of capsid protein VP0. Interacts with capsid protein VP1 and capsid protein VP3 in the mature capsid. As to quaternary structure, interacts with capsid protein VP0 and capsid protein VP1 to form heterotrimeric protomers. Five protomers subsequently associate to form pentamers which serve as building blocks for the capsid. Interacts with capsid protein VP4 in the mature capsid. Interacts with protein 2C; this interaction may be important for virion morphogenesis. In terms of assembly, interacts with capsid protein VP1 and capsid protein VP3. Homodimer. As to quaternary structure, homohexamer; forms a hexameric ring structure with 6-fold symmetry characteristic of AAA+ ATPases. Interacts (via N-terminus) with host RTN3 (via reticulon domain); this interaction is important for viral replication. Interacts with capsid protein VP3; this interaction may be important for virion morphogenesis. In terms of assembly, interacts with protein 3CD. Homodimer. Interacts with host GBF1. Interacts (via GOLD domain) with host ACBD3 (via GOLD domain); this interaction allows the formation of a viral protein 3A/ACBD3 heterotetramer with a 2:2 stoichiometry, which will stimulate the recruitment of host PI4KB in order to synthesize PI4P at the viral RNA replication sites. As to quaternary structure, interacts with RNA-directed RNA polymerase. In terms of assembly, interacts with protein 3AB and with RNA-directed RNA polymerase. Interacts with Viral protein genome-linked and with protein 3CD. Mg(2+) serves as cofactor. Post-translationally, specific enzymatic cleavages in vivo by the viral proteases yield processing intermediates and the mature proteins. In terms of processing, myristoylation is required for the formation of pentamers during virus assembly. Further assembly of 12 pentamers and a molecule of genomic RNA generates the provirion. During virion maturation, immature virions are rendered infectious following cleavage of VP0 into VP4 and VP2. This maturation seems to be an autocatalytic event triggered by the presence of RNA in the capsid and it is followed by a conformational change infectious virion. Post-translationally, myristoylation is required during RNA encapsidation and formation of the mature virus particle. In terms of processing, VPg is uridylylated by the polymerase into VPg-pUpU. This acts as a nucleotide-peptide primer for the genomic RNA replication.

Its subcellular location is the virion. It localises to the host cytoplasm. It is found in the host cytoplasmic vesicle membrane. The protein localises to the host nucleus. The enzyme catalyses a ribonucleoside 5'-triphosphate + H2O = a ribonucleoside 5'-diphosphate + phosphate + H(+). It carries out the reaction Selective cleavage of Tyr-|-Gly bond in the picornavirus polyprotein.. It catalyses the reaction RNA(n) + a ribonucleoside 5'-triphosphate = RNA(n+1) + diphosphate. The catalysed reaction is Selective cleavage of Gln-|-Gly bond in the poliovirus polyprotein. In other picornavirus reactions Glu may be substituted for Gln, and Ser or Thr for Gly.. With respect to regulation, replication or transcription is subject to high level of random mutations by the nucleotide analog ribavirin. Its function is as follows. Forms an icosahedral capsid of pseudo T=3 symmetry with capsid proteins VP2 and VP3. The capsid is 300 Angstroms in diameter, composed of 60 copies of each capsid protein and enclosing the viral positive strand RNA genome. Capsid protein VP1 mainly forms the vertices of the capsid. Capsid protein VP1 interacts with host cell receptor to provide virion attachment to target host cells. This attachment induces virion internalization. Tyrosine kinases are probably involved in the entry process. After binding to its receptor, the capsid undergoes conformational changes. Capsid protein VP1 N-terminus (that contains an amphipathic alpha-helix) and capsid protein VP4 are externalized. Together, they shape a pore in the host membrane through which viral genome is translocated to host cell cytoplasm. Forms an icosahedral capsid of pseudo T=3 symmetry with capsid proteins VP2 and VP3. The capsid is 300 Angstroms in diameter, composed of 60 copies of each capsid protein and enclosing the viral positive strand RNA genome. In terms of biological role, lies on the inner surface of the capsid shell. After binding to the host receptor, the capsid undergoes conformational changes. Capsid protein VP4 is released, Capsid protein VP1 N-terminus is externalized, and together, they shape a pore in the host membrane through which the viral genome is translocated into the host cell cytoplasm. Functionally, component of immature procapsids, which is cleaved into capsid proteins VP4 and VP2 after maturation. Allows the capsid to remain inactive before the maturation step. Its function is as follows. Cysteine protease that cleaves viral polyprotein and specific host proteins. It is responsible for the autocatalytic cleavage between the P1 and P2 regions, which is the first cleavage occurring in the polyprotein. Also cleaves the host translation initiation factor EIF4G1, in order to shut down the capped cellular mRNA translation. Inhibits the host nucleus-cytoplasm protein and RNA trafficking by cleaving host members of the nuclear pores. Counteracts stress granule formation probably by antagonizing its assembly or promoting its dissassembly. Plays an essential role in the virus replication cycle by acting as a viroporin. Creates a pore in the host endoplasmic reticulum and as a consequence releases Ca2+ in the cytoplasm of infected cell. In turn, high levels of cytoplasmic calcium may trigger membrane trafficking and transport of viral ER-associated proteins to viroplasms, sites of viral genome replication. In terms of biological role, induces and associates with structural rearrangements of intracellular membranes. Displays RNA-binding, nucleotide binding and NTPase activities. May play a role in virion morphogenesis and viral RNA encapsidation by interacting with the capsid protein VP3. Functionally, localizes the viral replication complex to the surface of membranous vesicles. Together with protein 3CD binds the Cis-Active RNA Element (CRE) which is involved in RNA synthesis initiation. Acts as a cofactor to stimulate the activity of 3D polymerase, maybe through a nucleid acid chaperone activity. Its function is as follows. Localizes the viral replication complex to the surface of membranous vesicles. It inhibits host cell endoplasmic reticulum-to-Golgi apparatus transport and causes the disassembly of the Golgi complex, possibly through GBF1 interaction. This would result in depletion of MHC, trail receptors and IFN receptors at the host cell surface. Plays an essential role in viral RNA replication by recruiting ACBD3 and PI4KB at the viral replication sites, thereby allowing the formation of the rearranged membranous structures where viral replication takes place. Acts as a primer for viral RNA replication and remains covalently bound to viral genomic RNA. VPg is uridylylated prior to priming replication into VPg-pUpU. The oriI viral genomic sequence may act as a template for this. The VPg-pUpU is then used as primer on the genomic RNA poly(A) by the RNA-dependent RNA polymerase to replicate the viral genome. During genome replication, the VPg-RNA linkage is removed by the host TDP2, thereby accelerating replication. During the late stage of the replication cycle, host TDP2 is excluded from sites of viral RNA synthesis and encapsidation, allowing for the generation of progeny virions. In terms of biological role, involved in the viral replication complex and viral polypeptide maturation. It exhibits protease activity with a specificity and catalytic efficiency that is different from protease 3C. Protein 3CD lacks polymerase activity. Protein 3CD binds to the 5'UTR of the viral genome. Functionally, major viral protease that mediates proteolytic processing of the polyprotein. Cleaves host EIF5B, contributing to host translation shutoff. Also cleaves host PABPC1, contributing to host translation shutoff. Its function is as follows. Replicates the viral genomic RNA on the surface of intracellular membranes. May form linear arrays of subunits that propagate along a strong head-to-tail interaction called interface-I. Covalently attaches UMP to a tyrosine of VPg, which is used to prime RNA synthesis. The positive stranded RNA genome is first replicated at virus induced membranous vesicles, creating a dsRNA genomic replication form. This dsRNA is then used as template to synthesize positive stranded RNA genomes. ss(+)RNA genomes are either translated, replicated or encapsidated. This is Genome polyprotein from Homo sapiens (Human).